Here is a 166-residue protein sequence, read N- to C-terminus: UPF0336 protein ML1908 (166 aa).

It belongs to the UPF0336 family.

This is UPF0336 protein ML1908 from Mycobacterium leprae (strain TN).